Consider the following 635-residue polypeptide: ATP-binding protein Uup (635 aa).

ABC transporter domains are found at residues 1-253 and 320-546; these read MSLI…RVEE and FEME…KTEE. ATP contacts are provided by residues 36–43 and 352–359; these read GRNGAGKS and GPNGCGKT. A C-terminal domain (CTD), binds DNA, required to complement a deletion mutant region spans residues 551–635; it reads KAETVKRSSS…EYLEALKNGG (85 aa). Positions 563 to 631 form a coiled coil; it reads SYKLQRELEQ…FERWEYLEAL (69 aa).

It belongs to the ABC transporter superfamily. ABCF family. Uup subfamily.

Its subcellular location is the cytoplasm. It catalyses the reaction ATP + H2O = ADP + phosphate + H(+). With respect to regulation, ATPase activity inhibited by N-ethylmaleimide but not by vanadate. Probably plays a role in ribosome assembly or function; overexpression suppresses cold-sensitive growth of a bipA deletion. May be involved in resolution of branched DNA intermediates that result from template switching in postreplication gaps. Binds DNA at Holliday junctions. May be involved in the correct segregation of nucleoids. Has ATPase activity, binds DNA non-sequence specifically; the presence of DNA does not change the ATPase activity. Mutations in this gene cause an increase in RecA-independent precise excision of transposons and insertion elements, and also reduce bacteriophage Mu growth. Genetic interactions among priB, dam, lexA, nagC, polA, rdgB, rdgB, rep and uup link the PriA-PriB replication restart pathway to DNA double-strand break repair. This chain is ATP-binding protein Uup, found in Escherichia coli (strain K12).